The primary structure comprises 434 residues: BEN domain-containing protein 7 (434 aa).

Glycyl lysine isopeptide (Lys-Gly) (interchain with G-Cter in SUMO2) cross-links involve residues Lys-16, Lys-56, and Lys-85. Disordered stretches follow at residues Pro-96–Glu-151 and Ser-212–Ser-262. A compositionally biased stretch (polar residues) spans Gln-97–Gly-150. Residues Ser-212–Leu-222 are compositionally biased toward basic residues. A Glycyl lysine isopeptide (Lys-Gly) (interchain with G-Cter in SUMO2) cross-link involves residue Lys-244. The 111-residue stretch at Gly-289 to Val-399 folds into the BEN domain. A Phosphothreonine modification is found at Thr-326. A Phosphoserine modification is found at Ser-330. The segment at Thr-414–Ala-434 is disordered.

This Mus musculus (Mouse) protein is BEN domain-containing protein 7 (Bend7).